A 478-amino-acid polypeptide reads, in one-letter code: 9-divinyl ether synthase (478 aa).

C431 contributes to the heme binding site.

It belongs to the cytochrome P450 family. 9-divinyl ether synthase subfamily.

It carries out the reaction (9S)-hydroperoxy-(10E,12Z)-octadecadienoate = colneleate + H2O. Involved in the biosynthesis of the anti-fungal toxins colneleic acid and colnelenic acid. The protein is 9-divinyl ether synthase (DES) of Capsicum annuum (Capsicum pepper).